The chain runs to 91 residues: Envelope glycoprotein N (91 aa).

The signal sequence occupies residues 1 to 23; sequence MGPPRRVCRAGLLFVLLVALAAG. The segment at 23–48 is disordered; sequence GDAGPRGEPPGEEGGRDGIGGARCET. The Virion surface portion of the chain corresponds to 24–55; that stretch reads DAGPRGEPPGEEGGRDGIGGARCETQNTGQMS. Residues 56–76 form a helical membrane-spanning segment; the sequence is APGALVPFYVGMASMGVCIIA. Residues 77–91 are Intravirion-facing; that stretch reads HVCQICQRLLAAGHA.

This sequence belongs to the herpesviridae glycoprotein N family. In terms of assembly, interacts (via N-terminus) with gM (via N-terminus). The gM-gN heterodimer forms the gCII complex.

The protein localises to the virion membrane. It is found in the host membrane. It localises to the host Golgi apparatus. The protein resides in the host trans-Golgi network. Its function is as follows. Envelope glycoprotein necessary for proper maturation of gM and modulation of its membrane fusion activity. Also plays a critical role in virion morphogenesis. The chain is Envelope glycoprotein N from Homo sapiens (Human).